We begin with the raw amino-acid sequence, 440 residues long: Protein EFFECTOR OF TRANSCRIPTION (440 aa).

A GIY-YIG domain is found at 131–167 (SIQGLGVAVNIHDADDISHGQTESIRTRLRSYGRPVP). A disordered region spans residues 172-216 (LGDNASQTITQKKTGGRSKDKKHGFEEERDVSRVEAEENNTNSVH). Polar residues predominate over residues 175–184 (NASQTITQKK). The span at 194 to 207 (HGFEEERDVSRVEA) shows a compositional bias: basic and acidic residues. Cx9Cx9RCx2HK repeat units follow at residues 247 to 272 (CGVLQEDGTTCLTAPVTGRKRCTEHK) and 295 to 320 (CGVILPEMVRCRSKPVSGRKRCEDHK). The tract at residues 339 to 363 (ILKEDKSKPKTRTSSTNQEEPGESL) is disordered. Cx9Cx9RCx2HK repeat units lie at residues 365 to 390 (CEATTKNGLPCTRSAPNGSKRCWQHK) and 409 to 434 (CGVKLHNGSVCEKTPVKGRKRCQEHK).

It is found in the nucleus. Functionally, transcription regulator that negatively modulates gibberellin-mediated developmental processes. May act as transcriptional repressor of giberellin controlled genes. Binds DNA without sequence preference. This Brassica napus (Rape) protein is Protein EFFECTOR OF TRANSCRIPTION.